Consider the following 144-residue polypeptide: Large ribosomal subunit protein uL13 (144 aa).

Belongs to the universal ribosomal protein uL13 family. As to quaternary structure, part of the 50S ribosomal subunit.

In terms of biological role, this protein is one of the early assembly proteins of the 50S ribosomal subunit, although it is not seen to bind rRNA by itself. It is important during the early stages of 50S assembly. The protein is Large ribosomal subunit protein uL13 of Buchnera aphidicola subsp. Baizongia pistaciae (strain Bp).